The chain runs to 1087 residues: Fanconi-associated nuclease 1 homolog (1087 aa).

Disordered stretches follow at residues 1-79 (MKSN…TPIK), 104-154 (FQKA…PNNL), 169-202 (EFLL…NNIT), 459-486 (TQNS…NNNI), 816-835 (ITSD…EKEN), and 842-871 (SVKK…EEEI). Residues 41-79 (TTTPPKTPTQPIRFTQNNNKENDKSNNNNNNNNTITPIK) are compositionally biased toward low complexity. A compositionally biased stretch (polar residues) spans 104–115 (FQKASTPSSPQI). Low complexity-rich tracts occupy residues 118-154 (KLPQ…PNNL), 182-202 (NTTT…NNIT), and 467-485 (NNNN…NNNN). Coiled coils occupy residues 419–490 (WKSK…KEYD) and 830–874 (KIEK…IIEI). Residues 848 to 871 (EQEEEEEEEEEGQGQEEEEEEEEI) are compositionally biased toward acidic residues. Mn(2+) contacts are provided by glutamate 899, aspartate 1023, glutamate 1051, and valine 1052. In terms of domain architecture, VRR-NUC spans 961–1083 (DDLLILLNQS…GCDVEVCLVK (123 aa)).

The protein belongs to the FAN1 family. It depends on Mn(2+) as a cofactor. Mg(2+) is required as a cofactor.

The enzyme catalyses Hydrolytically removes 5'-nucleotides successively from the 3'-hydroxy termini of 3'-hydroxy-terminated oligonucleotides.. Its function is as follows. Nuclease required for the repair of DNA interstrand cross-links (ICL). Acts as a 5'-3' exonuclease that anchors at a cut end of DNA and cleaves DNA successively at every third nucleotide, allowing to excise an ICL from one strand through flanking incisions. The protein is Fanconi-associated nuclease 1 homolog (mtmr15) of Dictyostelium discoideum (Social amoeba).